A 455-amino-acid polypeptide reads, in one-letter code: Ribosomal protein uS12 methylthiotransferase RimO (455 aa).

One can recognise an MTTase N-terminal domain in the interval 30-140 (PTIGMVSLGC…VLDAVHGAVP (111 aa)). [4Fe-4S] cluster is bound by residues Cys39, Cys75, Cys104, Cys171, Cys175, and Cys178. One can recognise a Radical SAM core domain in the interval 157–386 (LTPRHFSYLK…MEKAQAISEA (230 aa)). A TRAM domain is found at 389 to 455 (AAKVGRRIEV…GEYDLWGRPV (67 aa)).

This sequence belongs to the methylthiotransferase family. RimO subfamily. The cofactor is [4Fe-4S] cluster.

Its subcellular location is the cytoplasm. The catalysed reaction is L-aspartate(89)-[ribosomal protein uS12]-hydrogen + (sulfur carrier)-SH + AH2 + 2 S-adenosyl-L-methionine = 3-methylsulfanyl-L-aspartate(89)-[ribosomal protein uS12]-hydrogen + (sulfur carrier)-H + 5'-deoxyadenosine + L-methionine + A + S-adenosyl-L-homocysteine + 2 H(+). In terms of biological role, catalyzes the methylthiolation of an aspartic acid residue of ribosomal protein uS12. This Cereibacter sphaeroides (strain ATCC 17029 / ATH 2.4.9) (Rhodobacter sphaeroides) protein is Ribosomal protein uS12 methylthiotransferase RimO.